A 507-amino-acid polypeptide reads, in one-letter code: Histidine--tRNA ligase (507 aa).

Belongs to the class-II aminoacyl-tRNA synthetase family. Homodimer.

It is found in the cytoplasm. It carries out the reaction tRNA(His) + L-histidine + ATP = L-histidyl-tRNA(His) + AMP + diphosphate + H(+). This chain is Histidine--tRNA ligase, found in Rhizobium leguminosarum bv. trifolii (strain WSM2304).